The primary structure comprises 442 residues: Plasmalemma vesicle-associated protein (442 aa).

The Cytoplasmic portion of the chain corresponds to 1 to 27 (MGLAMEHGGSYARAGGSSRGCWYYLRY). A helical; Signal-anchor for type II membrane protein transmembrane segment spans residues 28-48 (FFLFVSLIQFLIILGLVLFMV). The Extracellular segment spans residues 49-442 (YGNVHVSTES…AGIPVAPSSG (394 aa)). Positions 57–77 (ESNLQATERRAEGLYSQLLGL) form a coiled coil. N-linked (GlcNAc...) asparagine glycosylation is found at Asn-83, Asn-89, Asn-113, and Asn-151. Coiled-coil stretches lie at residues 202–225 (KTRE…QALC) and 280–387 (SSKV…SALD). 2 disordered regions span residues 301–328 (NSDL…VEKE) and 394–418 (SQPM…PASL). The span at 319–328 (QEAKQKVEKE) shows a compositional bias: basic and acidic residues.

Homodimer. Expressed in lung, kidney, heart, aorta, placenta, muscle, pituitary gland, adrenals, mammary gland, bladder, lymph node, bone marrow, trachea, digestive tract, liver and tumor-associated endothelium.

The protein resides in the cell membrane. Its subcellular location is the membrane. It localises to the caveola. It is found in the cytoplasm. The protein localises to the perinuclear region. In terms of biological role, endothelial cell-specific membrane protein involved in the formation of the diaphragms that bridge endothelial fenestrae. It is also required for the formation of stomata of caveolae and transendothelial channels. Functions in microvascular permeability, endothelial fenestrae contributing to the passage of water and solutes and regulating transcellular versus paracellular flow in different organs. Plays a specific role in embryonic development. This Homo sapiens (Human) protein is Plasmalemma vesicle-associated protein (PLVAP).